Consider the following 261-residue polypeptide: DNA repair protein RecO (261 aa).

The protein belongs to the RecO family.

Involved in DNA repair and RecF pathway recombination. This chain is DNA repair protein RecO, found in Chlorobium phaeobacteroides (strain BS1).